The following is a 180-amino-acid chain: Cytidylate kinase (180 aa).

Position 7-15 (7-15) interacts with ATP; the sequence is GPPGSGKST.

Belongs to the cytidylate kinase family. Type 2 subfamily.

It is found in the cytoplasm. It catalyses the reaction CMP + ATP = CDP + ADP. It carries out the reaction dCMP + ATP = dCDP + ADP. The protein is Cytidylate kinase of Sulfurisphaera tokodaii (strain DSM 16993 / JCM 10545 / NBRC 100140 / 7) (Sulfolobus tokodaii).